We begin with the raw amino-acid sequence, 306 residues long: Glutathione transport system permease protein GsiC (306 aa).

The Cytoplasmic segment spans residues 1 to 8; sequence MLNYVIKR. A helical membrane pass occupies residues 9–29; it reads LLGLIPTLFIVSVLVFLFVHM. Residues 30–102 are Periplasmic-facing; it reads LPGDPARLIA…SRFMPTLWLT (73 aa). The ABC transmembrane type-1 domain occupies 95–292; the sequence is FMPTLWLTIT…LEFILINLVV (198 aa). The helical transmembrane segment at 103–123 threads the bilayer; it reads ITSMVWAVIFGMAAGIIAAVW. Residues 124-134 are Cytoplasmic-facing; the sequence is RNRWPDRLSMT. A helical transmembrane segment spans residues 135–155; it reads IAVSGISFPAFALGMLLIQVF. Over 156–168 the chain is Periplasmic; it reads SVELGWLPTVGAD. Residues 169 to 189 traverse the membrane as a helical segment; the sequence is SWQHYILSSLTLGAAVAAVMA. The Cytoplasmic portion of the chain corresponds to 190–228; the sequence is RFTRASFVDVLSEDYMRTARAKGVSETWVVLKHGLRNAM. Residues 229–249 form a helical membrane-spanning segment; sequence IPVVTMMGLQFGFLLGGSIVV. At 250–277 the chain is on the periplasmic side; the sequence is EKVFNWPGLGRLLVDSVEMRDYPVIQAE. The chain crosses the membrane as a helical span at residues 278-298; the sequence is ILLFSLEFILINLVVDVLYAA. Residues 299–306 are Cytoplasmic-facing; that stretch reads INPAIRYK.

This sequence belongs to the binding-protein-dependent transport system permease family. In terms of assembly, the complex is composed of two ATP-binding proteins (GsiA), two transmembrane proteins (GsiC and GsiD) and a solute-binding protein (GsiB).

The protein localises to the cell inner membrane. Functionally, part of the ABC transporter complex GsiABCD involved in glutathione import. Probably responsible for the translocation of the substrate across the membrane. The polypeptide is Glutathione transport system permease protein GsiC (Shigella boydii serotype 4 (strain Sb227)).